Reading from the N-terminus, the 239-residue chain is DNA repair protein RecO (239 aa).

The protein belongs to the RecO family.

In terms of biological role, involved in DNA repair and RecF pathway recombination. The polypeptide is DNA repair protein RecO (Glaesserella parasuis serovar 5 (strain SH0165) (Haemophilus parasuis)).